Consider the following 236-residue polypeptide: 7-cyano-7-deazaguanine synthase (236 aa).

C7 to A17 is an ATP binding site. Residues C185, C193, C196, and C199 each coordinate Zn(2+).

It belongs to the QueC family. It depends on Zn(2+) as a cofactor.

The catalysed reaction is 7-carboxy-7-deazaguanine + NH4(+) + ATP = 7-cyano-7-deazaguanine + ADP + phosphate + H2O + H(+). Its pathway is purine metabolism; 7-cyano-7-deazaguanine biosynthesis. In terms of biological role, catalyzes the ATP-dependent conversion of 7-carboxy-7-deazaguanine (CDG) to 7-cyano-7-deazaguanine (preQ(0)). The chain is 7-cyano-7-deazaguanine synthase from Rhizobium etli (strain CIAT 652).